The primary structure comprises 183 residues: Gamma-crystallin N (183 aa).

4 consecutive Beta/gamma crystallin 'Greek key' domains span residues 6–46, 47–89, 95–136, and 138–180; these read GKIT…RVES, GAWV…RPVG, FRID…KVYG, and GAWV…RRVL.

Belongs to the beta/gamma-crystallin family. In terms of assembly, monomer. Primordially eye-specific. Present in lens nucleus. In the retina, expression in observed in the outer plexiform layer (containing photoreceptors axons and synapses) and photoreceptor outer segments (at protein level). Also detected in the auditory hindbrain where it is highly expressed in the medial nucleus of the trapezoid body, but also present in other nuclei of the superior olivary complex.

Functionally, crystallins are the dominant structural components of the vertebrate eye lens. Also plays an important role for integrity and function of auditory nuclei. The sequence is that of Gamma-crystallin N from Mus musculus (Mouse).